Reading from the N-terminus, the 343-residue chain is Pseudaminic acid synthase (343 aa).

Positions 287–343 constitute an AFP-like domain; the sequence is SLYASKDIKKGEMFSEENVKSVRPSFGLHPKFYQELLGKKASKDIKFGDALKQGDFQ.

Belongs to the pseudaminic acid synthase family. A divalent metal cation is required as a cofactor.

The enzyme catalyses 2,4-diacetamido-2,4,6-trideoxy-beta-L-altrose + phosphoenolpyruvate + H2O = pseudaminate + phosphate. Functionally, catalyzes the fifth step in the biosynthesis of pseudaminic acid, a sialic-acid-like sugar that is used to modify flagellin. Catalyzes the condensation of phosphoenolpyruvate with 2,4-diacetamido-2,4,6-trideoxy-beta-l-altropyranose, forming pseudaminic acid. The polypeptide is Pseudaminic acid synthase (pseI) (Campylobacter jejuni subsp. jejuni serotype O:2 (strain ATCC 700819 / NCTC 11168)).